Reading from the N-terminus, the 279-residue chain is Urease accessory protein UreD (279 aa).

The protein belongs to the UreD family. In terms of assembly, ureD, UreF and UreG form a complex that acts as a GTP-hydrolysis-dependent molecular chaperone, activating the urease apoprotein by helping to assemble the nickel containing metallocenter of UreC. The UreE protein probably delivers the nickel.

It localises to the cytoplasm. Required for maturation of urease via the functional incorporation of the urease nickel metallocenter. The chain is Urease accessory protein UreD from Nostoc sp. (strain PCC 7120 / SAG 25.82 / UTEX 2576).